The chain runs to 569 residues: Urease subunit alpha (569 aa).

Positions Gly-131–Leu-569 constitute a Urease domain. Ni(2+) is bound by residues His-136, His-138, and Lys-219. Lys-219 is modified (N6-carboxylysine). His-221 lines the substrate pocket. Residues His-248 and His-274 each coordinate Ni(2+). The Proton donor role is filled by His-322. Asp-362 contributes to the Ni(2+) binding site.

The protein belongs to the metallo-dependent hydrolases superfamily. Urease alpha subunit family. In terms of assembly, heterotrimer of UreA (gamma), UreB (beta) and UreC (alpha) subunits. Two heterotrimers associate to form the active enzyme. In most bacteria it is thought that three heterotrimers form the active enzyme. The cofactor is Ni cation. Post-translationally, carboxylation allows a single lysine to coordinate two nickel ions.

The protein resides in the cytoplasm. It carries out the reaction urea + 2 H2O + H(+) = hydrogencarbonate + 2 NH4(+). Its pathway is nitrogen metabolism; urea degradation; CO(2) and NH(3) from urea (urease route): step 1/1. Its activity is regulated as follows. Inhibited by HgCl2 and acetohydroxyamic acid slightly by EDTA, but not by boric acid or L-methionine-DL-sulfoximine. The protein is Urease subunit alpha of Prochlorococcus marinus subsp. pastoris (strain PCC 9511).